Reading from the N-terminus, the 317-residue chain is Cytochrome c biogenesis protein CcsA (317 aa).

7 consecutive transmembrane segments (helical) span residues 13-35 (ISFSIIAIVITTHLMTLLVHEIV), 44-64 (GMIATFFCITGLLVTRWIYSG), 71-91 (LYESLMFLSWSFSLILMVPYF), 143-163 (MLLSYAALLCGSLLSIALLVI), 171-191 (MIGFTNHLLIWPFSFGEIKYL), 225-245 (VIGLGFTFSTIGILSGAVWAN), and 286-306 (AIVASMGFLIIWICYFGVNLL).

Belongs to the CcmF/CycK/Ccl1/NrfE/CcsA family. As to quaternary structure, may interact with Ccs1.

Its subcellular location is the plastid. The protein localises to the chloroplast thylakoid membrane. Its function is as follows. Required during biogenesis of c-type cytochromes (cytochrome c6 and cytochrome f) at the step of heme attachment. This chain is Cytochrome c biogenesis protein CcsA, found in Illicium oligandrum (Star anise).